The primary structure comprises 146 residues: Hemoglobin subunit beta (146 aa).

At Val1 the chain carries N-acetylvaline. The region spanning 2–146 is the Globin domain; the sequence is HLTGEEKTAV…VANALAHKYH (145 aa). Thr12 bears the Phosphothreonine mark. Phosphoserine is present on Ser44. Lys59 is modified (N6-acetyllysine). His63 contributes to the heme b binding site. Lys82 carries the N6-acetyllysine modification. Position 92 (His92) interacts with heme b. The residue at position 93 (Cys93) is an S-nitrosocysteine. Residue Lys144 is modified to N6-acetyllysine.

This sequence belongs to the globin family. Heterotetramer of two alpha chains and two beta chains. As to expression, red blood cells.

Its function is as follows. Involved in oxygen transport from the lung to the various peripheral tissues. The protein is Hemoglobin subunit beta (HBB) of Nasua nasua (Ring-tailed coati).